Reading from the N-terminus, the 578-residue chain is Octopamine receptor 2 (578 aa).

Topologically, residues 1 to 84 (MMSFPIALFA…YDSITIFITV (84 aa)) are extracellular. N-linked (GlcNAc...) asparagine glycans are attached at residues Asn-13, Asn-38, Asn-46, and Asn-59. The helical transmembrane segment at 85–107 (AVVLTLITLWTILGNFFVLMALY) threads the bilayer. The Cytoplasmic segment spans residues 108-117 (RYGTLRTMSN). The helical transmembrane segment at 118-139 (CLIGNLAISDLLLAVTVLPIST) threads the bilayer. The Extracellular segment spans residues 140-156 (VHDLLGYWVFGEFTCTL). A disulfide bond links Cys-154 and Cys-239. A helical transmembrane segment spans residues 157–177 (WLCMDVLYCTASIWGLCTVAF). The Cytoplasmic segment spans residues 178 to 197 (DRYLATVYPVWYHDQRSVRK). The helical transmembrane segment at 198–220 (AVGCIVFVWIFSIVISFAPFIGW) threads the bilayer. Residues 221–251 (QHMIPSFFSFNASIQRYQCILFTSSSYVLYS) are Extracellular-facing. The N-linked (GlcNAc...) asparagine glycan is linked to Asn-231. A helical transmembrane segment spans residues 252-272 (SMGSFVIPAILMAFMYVRIFV). The Cytoplasmic portion of the chain corresponds to 273–495 (VLHNQSRGVK…ELREQRATKR (223 aa)). Residues 496–517 (MLLIMACFCVCWMPFLFMYILR) form a helical membrane-spanning segment. Residues 518–531 (SVCDTCHMNQHFVA) are Extracellular-facing. Residues 532–553 (AIIWLGYVNSSLNPVLYTLFND) traverse the membrane as a helical segment. Over 554 to 578 (DFKVAFKRLIGARSPSAYRSPGPRR) the chain is Cytoplasmic.

Belongs to the G-protein coupled receptor 1 family.

It is found in the cell membrane. In terms of biological role, receptor for octopamine. Octopamine (OA) is a neurotransmitter, neurohormone, and neuromodulator in invertebrates. This receptor induces a long lasting opening of voltage- independent chloride channels, a process which seems to involve protein phosphorylation but does not require either cAPK or PKC. The rank order of potency for agonists is p-synephrine &gt; p-octopamine &gt; xylometazoline &gt; B-HT920 &gt; norepinephrine = clonidine &gt; epinephrine &gt; p-tyramine &gt; phenylephrine = oxymetazoline = mehoxamine = dopamine &gt; serotonin &gt; histamine. For antagonists, the rank order is rauwolscine = mianserin &gt; phentolamine &gt; chlorpromazine &gt; spiperone &gt; yohimbine &gt; propanolol &gt; alprenolol &gt; prazosine &gt; pindolol. This Lymnaea stagnalis (Great pond snail) protein is Octopamine receptor 2.